The primary structure comprises 391 residues: Putative gustatory receptor 36a (391 aa).

Topologically, residues 1-3 (MFD) are cytoplasmic. A helical membrane pass occupies residues 4 to 24 (WVGLLLKVLYYYGQIIGLINF). Residues 25–38 (EIDWQRGRVVAAQR) lie on the Extracellular side of the membrane. The helical transmembrane segment at 39–59 (GILFAIAINVLICMVLLLQIS) threads the bilayer. The Cytoplasmic portion of the chain corresponds to 60-73 (KKFNLDVYFGRANQ). The chain crosses the membrane as a helical span at residues 74 to 94 (LHQYVIIVMVSLRMASGISAI). Over 95–126 (LNRWRQRAQLMRLVECVLRLFLKKPHVKQMSR) the chain is Extracellular. The chain crosses the membrane as a helical span at residues 127–147 (WAILVKFSVGVVSNFLQMAIS). The Cytoplasmic segment spans residues 148–165 (MESLDRLGFNEFVGMASD). Residues 166-186 (FWMSAIINMAISQHYLVILFV) traverse the membrane as a helical segment. The Extracellular segment spans residues 187–247 (RAYYHLLKTE…LQSIVTQLNQ (61 aa)). Residues 248–268 (VFGIQGIMVYGGYYIFSVATT) form a helical membrane-spanning segment. Topologically, residues 269–290 (YITYSLAINGIEELHLSVRAAA) are cytoplasmic. The chain crosses the membrane as a helical span at residues 291–311 (LVFSWFLFYYTSAILNLFVML). The Extracellular portion of the chain corresponds to 312-391 (KLFDDHKEME…FLIQYDMEYF (80 aa)).

Belongs to the insect chemoreceptor superfamily. Gustatory receptor (GR) family. Gr22e subfamily.

The protein resides in the cell membrane. In terms of biological role, probable gustatory receptor which mediates acceptance or avoidance behavior, depending on its substrates. The polypeptide is Putative gustatory receptor 36a (Gr36a) (Drosophila melanogaster (Fruit fly)).